The primary structure comprises 113 residues: U11-theraphotoxin-Hhn1e (113 aa).

Residues 1 to 21 (MNTVRVTFLLVFVLAVSLGQA) form the signal peptide. Residues 22 to 74 (DKDENRMEMLEKTEQGKSYLDFAENLLLQKLEELEARLLEEDSEESRNSRQKR) constitute a propeptide that is removed on maturation. Residues 60–69 (LEEDSEESRN) are compositionally biased toward basic and acidic residues. Positions 60–87 (LEEDSEESRNSRQKRCIGEGVPRDENDP) are disordered. 2 cysteine pairs are disulfide-bonded: cysteine 75–cysteine 90 and cysteine 89–cysteine 110.

This sequence belongs to the neurotoxin 14 (magi-1) family. 01 (HNTX-16) subfamily. Expressed by the venom gland.

The protein localises to the secreted. In terms of biological role, probable ion channel inhibitor. The polypeptide is U11-theraphotoxin-Hhn1e (Cyriopagopus hainanus (Chinese bird spider)).